Consider the following 573-residue polypeptide: PCNA-interacting partner (573 aa).

The disordered stretch occupies residues 492 to 532 (TGGQVKNKPCKNVANKRSKRKQVDIQSETTNAQENEPPQKK). Residues 515–527 (DIQSETTNAQENE) show a composition bias toward polar residues.

It belongs to the PARI family.

The protein localises to the cytoplasm. The protein resides in the nucleus. Functionally, required to suppress inappropriate homologous recombination, thereby playing a central role DNA repair and in the maintenance of genomic stability. The sequence is that of PCNA-interacting partner (parpbp) from Xenopus tropicalis (Western clawed frog).